The following is a 323-amino-acid chain: MNTQKPFENHLKSVDDLKTTYEEYRAGFIAFALEKNKRSTPYIERARALKVAASVAKTPKDLLYLEDIQDALLYASGISDKAKKFLTEDDKKESINNLIENFLEPAGEEFIDELIFRYLLFQGDSLGGTMRNIAGALAQQKLTRAIISALDIANIPYKWLDSRDKKYTNWMDKPEDDYELETFAKGISWTINGKHRTLMYNITVPLVKKNVDICLFNCEPEIYTPQKVHQQPEKYLLLGELKGGIDPAGADEHWKTANTALTRIRNKFSEKGLSPKTIFIGAAIEHSMAEEIWDQLQSGSLTNSANLTKTEQVGSLCRWIINI.

Residues Asp-212, Glu-240, and Lys-242 each contribute to the Mg(2+) site.

As to quaternary structure, homodimer.

It carries out the reaction Endonucleolytic cleavage of DNA to give specific double-stranded fragments with terminal 5'-phosphates.. A P subtype restriction enzyme that recognizes the double-stranded sequence 5'-CYCGRG-3' and cleaves after C-1. This Geobacillus stearothermophilus (Bacillus stearothermophilus) protein is Type II restriction enzyme BsoBI.